The sequence spans 81 residues: UPF0729 protein C18orf32 homolog (81 aa).

The span at 45-58 (AASDQKVSEKSNGT) shows a compositional bias: polar residues. Positions 45-81 (AASDQKVSEKSNGTCKPESNGEATANGSTIAADKKTD) are disordered.

This sequence belongs to the UPF0729 family.

The chain is UPF0729 protein C18orf32 homolog from Anoplopoma fimbria (Sablefish).